The chain runs to 429 residues: Metacaspase-1A (429 aa).

The interval methionine 1 to glycine 68 is disordered. Positions serine 8 to proline 19 are enriched in gly residues. The segment covering glycine 20–glutamine 45 has biased composition (low complexity). Residues histidine 46–asparagine 62 show a composition bias toward polar residues. Residues histidine 220 and cysteine 276 contribute to the active site.

It belongs to the peptidase C14B family.

Its function is as follows. Involved in cell death (apoptosis). The polypeptide is Metacaspase-1A (casA) (Aspergillus clavatus (strain ATCC 1007 / CBS 513.65 / DSM 816 / NCTC 3887 / NRRL 1 / QM 1276 / 107)).